Here is a 22-residue protein sequence, read N- to C-terminus: Odorant-binding protein 1 (22 aa).

Belongs to the calycin superfamily. Lipocalin family. Homodimer. In terms of processing, the N-terminus is blocked.

Functionally, binds the chemical odorant, 2-isobutyl-3-methoxypyrazine. The sequence is that of Odorant-binding protein 1 from Oryctolagus cuniculus (Rabbit).